A 292-amino-acid chain; its full sequence is Elongation factor Ts (292 aa).

Positions 80–83 (TDFV) are involved in Mg(2+) ion dislocation from EF-Tu.

The protein belongs to the EF-Ts family.

It is found in the cytoplasm. Associates with the EF-Tu.GDP complex and induces the exchange of GDP to GTP. It remains bound to the aminoacyl-tRNA.EF-Tu.GTP complex up to the GTP hydrolysis stage on the ribosome. This chain is Elongation factor Ts, found in Cupriavidus pinatubonensis (strain JMP 134 / LMG 1197) (Cupriavidus necator (strain JMP 134)).